Reading from the N-terminus, the 163-residue chain is MADDPHKTIYVLNGPNLNLLGTREPETYGHATLADVERLCVETATRFGLVAECRQSNHEGVLVDCVHEARVKGVAGIILNAGAYSHTSIALHDALMGVKIPTVEVHISNIHARESFRHHSFTAKAAFASICGFGIDGYRLAITGLAAKIGATTDTKTDITAQA.

Y28 acts as the Proton acceptor in catalysis. Substrate is bound by residues N80, H86, and D93. H106 (proton donor) is an active-site residue. Residues 107–108 (IS) and R117 contribute to the substrate site.

It belongs to the type-II 3-dehydroquinase family. In terms of assembly, homododecamer.

The catalysed reaction is 3-dehydroquinate = 3-dehydroshikimate + H2O. It participates in metabolic intermediate biosynthesis; chorismate biosynthesis; chorismate from D-erythrose 4-phosphate and phosphoenolpyruvate: step 3/7. Catalyzes a trans-dehydration via an enolate intermediate. In Bradyrhizobium sp. (strain BTAi1 / ATCC BAA-1182), this protein is 3-dehydroquinate dehydratase.